Reading from the N-terminus, the 387-residue chain is Protein RecA, chromosomal (387 aa).

80–87 (GPESSGKT) contributes to the ATP binding site. Residues 352–387 (EVAETTEDTSTKAKATKAKKEEKVVETEEIELELED) are disordered. A compositionally biased stretch (acidic residues) spans 378–387 (TEEIELELED).

This sequence belongs to the RecA family.

It is found in the cytoplasm. Its function is as follows. Can catalyze the hydrolysis of ATP in the presence of single-stranded DNA, the ATP-dependent uptake of single-stranded DNA by duplex DNA, and the ATP-dependent hybridization of homologous single-stranded DNAs. It interacts with LexA causing its activation and leading to its autocatalytic cleavage. The polypeptide is Protein RecA, chromosomal (Lactococcus lactis subsp. lactis (strain IL1403) (Streptococcus lactis)).